Reading from the N-terminus, the 197-residue chain is Nucleoid occlusion factor SlmA (197 aa).

The region spanning 7-67 (INRREHILQC…GLIDFIEESL (61 aa)) is the HTH tetR-type domain. Positions 30-49 (TTAKLAAEVGVSEAALYRHF) form a DNA-binding region, H-T-H motif.

It belongs to the nucleoid occlusion factor SlmA family. As to quaternary structure, homodimer. Interacts with FtsZ.

The protein resides in the cytoplasm. Its subcellular location is the nucleoid. Required for nucleoid occlusion (NO) phenomenon, which prevents Z-ring formation and cell division over the nucleoid. Acts as a DNA-associated cell division inhibitor that binds simultaneously chromosomal DNA and FtsZ, and disrupts the assembly of FtsZ polymers. SlmA-DNA-binding sequences (SBS) are dispersed on non-Ter regions of the chromosome, preventing FtsZ polymerization at these regions. In Shewanella sediminis (strain HAW-EB3), this protein is Nucleoid occlusion factor SlmA.